The following is a 1179-amino-acid chain: Dynein axonemal assembly factor 9 (1179 aa).

In terms of assembly, interacts with ARL3.

Functionally, may act as an effector for ARL3. The protein is Dynein axonemal assembly factor 9 of Mus musculus (Mouse).